The chain runs to 207 residues: Protein GET1 (207 aa).

Residues 1–4 (MPSL) lie on the Lumenal side of the membrane. The chain crosses the membrane as a helical span at residues 5–24 (LISVLFLHIAIYIINTIAAS). At 25–110 (TIDSLLWLIY…FFDVAVKALR (86 aa)) the chain is on the cytoplasmic side. Residues 44–97 (IAREQHQMKLEVVQLKREMNATSSQDEFAKWAKLRRRHDKALEEYEVKNKQFSR) are a coiled coil. The chain crosses the membrane as a helical span at residues 111–131 (WAGTSGLIVFLQFWFSKTPIF). At 132–155 (TLPPSWIPWQVEWVLSFPRAPMGT) the chain is on the lumenal side. Residues 156–172 (VSIQVWGGACAVVVALI) form a helical membrane-spanning segment. Topologically, residues 173 to 207 (GEAIGATVRYLYASKDSMEAIKVGAGAVEKEKKRQ) are cytoplasmic.

This sequence belongs to the WRB/GET1 family. Interacts with GET3.

It localises to the endoplasmic reticulum membrane. Functionally, required for the post-translational delivery of tail-anchored (TA) proteins to the endoplasmic reticulum. Acts as a membrane receptor for soluble GET3, which recognizes and selectively binds the transmembrane domain of TA proteins in the cytosol. The polypeptide is Protein GET1 (Paracoccidioides brasiliensis (strain Pb18)).